A 652-amino-acid chain; its full sequence is Forkhead box protein O1-A (652 aa).

Disordered stretches follow at residues 1–57 (MADA…EPSS), 208–277 (SSWW…NSHS), and 359–406 (NLLS…QQTQ). The segment covering 41-57 (DSNTSSPAPSVKQEPSS) has biased composition (polar residues). A DNA-binding region (fork-head) is located at residues 134–228 (WGNMSYADLI…KSGKSPRRRA (95 aa)). Residues 238-249 (AKSRGRAAKKKL) are compositionally biased toward basic residues. A compositionally biased stretch (low complexity) spans 362–397 (SPKNPSTGGPGSGSNQSSPSSLMQASPGYSPYSSPG).

Its subcellular location is the cytoplasm. It localises to the nucleus. In terms of biological role, transcription factor that regulates metabolic homeostasis in response to oxidative stress. Binds to the consensus sequence 5'-TT[G/A]TTTTG-3' and the related Daf-16 family binding element (DBE) with consensus sequence 5'-TT[G/A]TTTAC-3'. Main regulator of redox balance and osteoblast numbers and controls bone mass. Orchestrates the endocrine function of the skeleton in regulating glucose metabolism. May be involved in regulating cellular homeostasis in the eye. May act as a positive regulator of apoptosis in cardiac smooth muscle cells as a result of its transcriptional activation of pro-apoptotic genes. The chain is Forkhead box protein O1-A (foxo1a) from Danio rerio (Zebrafish).